The chain runs to 217 residues: E3 ubiquitin-protein ligase znrf2 (217 aa).

Disordered regions lie at residues 1-27 (MGAK…SATA) and 63-111 (QFIS…ERST). A lipid anchor (N-myristoyl glycine) is attached at glycine 2. The segment covering 68–100 (RTRSVGPSARPQSGINIPNSGAYSSADSGNSTP) has biased composition (polar residues). The RING-type; atypical zinc finger occupies 174–215 (CAICLEELLQGDTIARLPCLCIYHKGCIDEWFEVNRSCPEHP).

Its subcellular location is the endosome membrane. The protein localises to the lysosome membrane. It localises to the presynaptic cell membrane. It carries out the reaction S-ubiquitinyl-[E2 ubiquitin-conjugating enzyme]-L-cysteine + [acceptor protein]-L-lysine = [E2 ubiquitin-conjugating enzyme]-L-cysteine + N(6)-ubiquitinyl-[acceptor protein]-L-lysine.. The protein operates within protein modification; protein ubiquitination. Its function is as follows. May play a role in the establishment and maintenance of neuronal transmission and plasticity via its ubiquitin ligase activity. E3 ubiquitin ligases accept ubiquitin from an E2 ubiquitin-conjugating enzyme in the form of a thioester and then directly transfer the ubiquitin to targeted substrates. The protein is E3 ubiquitin-protein ligase znrf2 (znrf2) of Danio rerio (Zebrafish).